Consider the following 148-residue polypeptide: uncharacterized protein (148 aa).

To A.tumefaciens Atu0565/AGR_C_992.

This is an uncharacterized protein from Rhizobium meliloti (strain 1021) (Ensifer meliloti).